Here is a 554-residue protein sequence, read N- to C-terminus: MLO-like protein 14 (554 aa).

Over 1–13 (MREETEPSERTLG) the chain is Extracellular. The helical transmembrane segment at 14–34 (LTPTWSVATVLTIFVFVSLIV) threads the bilayer. At 35–63 (ERSIHRLSNWLQKTKRKPLFAALEKMKEE) the chain is on the cytoplasmic side. The chain crosses the membrane as a helical span at residues 64–84 (LMLLGFISLLLTATSSTIANI). Topologically, residues 85 to 158 (CVSSSFHNDR…SYEGMEQLHR (74 aa)) are extracellular. Residues 159–179 (FIFIMAVTHVTYSCLTMLLAI) traverse the membrane as a helical segment. The Cytoplasmic segment spans residues 180–281 (VKIHRWRIWE…MIRSMEEEFQ (102 aa)). The helical transmembrane segment at 282-302 (KIVGVSGPLWGFVVGFMLFNI) threads the bilayer. Position 303 (Lys303) is a topological domain, extracellular. Residues 304-324 (GSNLYFWLAIIPITLVLLVGA) form a helical membrane-spanning segment. Over 325-366 (KLQHVIATLALENASITEYASGIKLRPRDELFWFKKPELLLS) the chain is Cytoplasmic. A helical membrane pass occupies residues 367–387 (LIHFIQFQNAFELASFFWFWW). Over 388-406 (QFGYNSCFLRNHLLVYLRL) the chain is Extracellular. The helical transmembrane segment at 407-427 (ILGFSGQFLCSYSTLPLYALV) threads the bilayer. Over 428–554 (TQMGTNYKAA…SSSLPMRREC (127 aa)) the chain is Cytoplasmic. The calmodulin-binding stretch occupies residues 441-462 (QRVRETINGWGKATRRKRRHGL).

Belongs to the MLO family.

The protein resides in the membrane. Functionally, may be involved in modulation of pathogen defense and leaf cell death. Activity seems to be regulated by Ca(2+)-dependent calmodulin binding and seems not to require heterotrimeric G proteins. This Arabidopsis thaliana (Mouse-ear cress) protein is MLO-like protein 14 (MLO14).